The sequence spans 284 residues: 3-methyl-2-oxobutanoate hydroxymethyltransferase (284 aa).

Residues aspartate 52 and aspartate 91 each coordinate Mg(2+). Residues 52–53, aspartate 91, and lysine 121 each bind 3-methyl-2-oxobutanoate; that span reads DS. Glutamate 123 contributes to the Mg(2+) binding site. Glutamate 191 serves as the catalytic Proton acceptor.

This sequence belongs to the PanB family. Homodecamer; pentamer of dimers. Mg(2+) serves as cofactor.

It localises to the cytoplasm. The catalysed reaction is 3-methyl-2-oxobutanoate + (6R)-5,10-methylene-5,6,7,8-tetrahydrofolate + H2O = 2-dehydropantoate + (6S)-5,6,7,8-tetrahydrofolate. Its pathway is cofactor biosynthesis; (R)-pantothenate biosynthesis; (R)-pantoate from 3-methyl-2-oxobutanoate: step 1/2. Its function is as follows. Catalyzes the reversible reaction in which hydroxymethyl group from 5,10-methylenetetrahydrofolate is transferred onto alpha-ketoisovalerate to form ketopantoate. In Deinococcus radiodurans (strain ATCC 13939 / DSM 20539 / JCM 16871 / CCUG 27074 / LMG 4051 / NBRC 15346 / NCIMB 9279 / VKM B-1422 / R1), this protein is 3-methyl-2-oxobutanoate hydroxymethyltransferase.